Consider the following 220-residue polypeptide: Uracil-DNA glycosylase (220 aa).

The active-site Proton acceptor is the aspartate 60.

This sequence belongs to the uracil-DNA glycosylase (UDG) superfamily. UNG family.

The protein resides in the cytoplasm. The catalysed reaction is Hydrolyzes single-stranded DNA or mismatched double-stranded DNA and polynucleotides, releasing free uracil.. In terms of biological role, excises uracil residues from the DNA which can arise as a result of misincorporation of dUMP residues by DNA polymerase or due to deamination of cytosine. This is Uracil-DNA glycosylase from Francisella tularensis subsp. tularensis (strain FSC 198).